The sequence spans 76 residues: Esculentin-2CG1 (76 aa).

Positions 1-22 (MFTMKKSMLLLFFLGTISLSLC) are cleaved as a signal peptide. A propeptide spans 23-37 (EEERSADEDDGEEEV) (removed in mature form). A disulfide bridge links Cys-70 with Cys-76.

As to expression, expressed by the skin glands.

It localises to the secreted. In terms of biological role, antimicrobial peptide active against a variety of Gram-positive and some Gram-negative bacterial strains. Has antifungal activity against a slime mold isolate. Has hemolytic activity against human erythrocytes. This Amolops chunganensis (Chungan torrent frog) protein is Esculentin-2CG1.